The sequence spans 195 residues: ATP-dependent Clp protease proteolytic subunit 2 (195 aa).

S95 serves as the catalytic Nucleophile. The active site involves H120.

The protein belongs to the peptidase S14 family. As to quaternary structure, fourteen ClpP subunits assemble into 2 heptameric rings which stack back to back to give a disk-like structure with a central cavity, resembling the structure of eukaryotic proteasomes.

It is found in the cytoplasm. It catalyses the reaction Hydrolysis of proteins to small peptides in the presence of ATP and magnesium. alpha-casein is the usual test substrate. In the absence of ATP, only oligopeptides shorter than five residues are hydrolyzed (such as succinyl-Leu-Tyr-|-NHMec, and Leu-Tyr-Leu-|-Tyr-Trp, in which cleavage of the -Tyr-|-Leu- and -Tyr-|-Trp bonds also occurs).. Its function is as follows. Cleaves peptides in various proteins in a process that requires ATP hydrolysis. Has a chymotrypsin-like activity. Plays a major role in the degradation of misfolded proteins. In Methylococcus capsulatus (strain ATCC 33009 / NCIMB 11132 / Bath), this protein is ATP-dependent Clp protease proteolytic subunit 2.